Here is a 929-residue protein sequence, read N- to C-terminus: Dual specificity protein phosphatase PHS1 (929 aa).

2 disordered regions span residues M1 to D27 and P545 to S618. Composition is skewed to basic and acidic residues over residues H552–M580 and E591–H606. The Tyrosine-protein phosphatase domain maps to K703–G848. C792 (phosphocysteine intermediate) is an active-site residue. C792–R798 contributes to the substrate binding site. The Nuclear export signal signature appears at Q903–L911.

In terms of assembly, interacts with MPK18. In terms of tissue distribution, expressed in roots, leaves and flowers.

It localises to the cytoplasm. It catalyses the reaction O-phospho-L-seryl-[protein] + H2O = L-seryl-[protein] + phosphate. The catalysed reaction is O-phospho-L-threonyl-[protein] + H2O = L-threonyl-[protein] + phosphate. The enzyme catalyses O-phospho-L-tyrosyl-[protein] + H2O = L-tyrosyl-[protein] + phosphate. Probable dual specificity phosphatase that binds and dephosphorylates MPK18, modulating the organization and dynamics of cortical microtubules. Acts as a negative regulator of abscisic acid (ABA) signaling during seed germination and light-induced stomata aperture. The polypeptide is Dual specificity protein phosphatase PHS1 (PHS1) (Arabidopsis thaliana (Mouse-ear cress)).